We begin with the raw amino-acid sequence, 445 residues long: T-box transcription factor TBX20 (445 aa).

The segment at residues 108–287 (LWDKFHELGT…SNPFAKGFRD (180 aa)) is a DNA-binding region (T-box). Residues 318 to 337 (EEDVLGEESQTTQSRGSAFT) form a disordered region. Polar residues predominate over residues 325–337 (ESQTTQSRGSAFT).

Prominently expressed in the extraembryonic mesoderm, developing heart, eye analage and motor neurons of hindbrain and spinal cord. Expressed in extraembryonic tissues such as the amnion and allantois.

It is found in the nucleus. Acts as a transcriptional activator and repressor required for cardiac development and may have key roles in the maintenance of functional and structural phenotypes in adult heart. In Mus musculus (Mouse), this protein is T-box transcription factor TBX20 (Tbx20).